The primary structure comprises 433 residues: MLVVELIIVLLAIFLGARLGGIGIGFAGGLGVLVLAAIGVKPGNIPFDVISIIMAVIAAISAMQVAGGLDYLVHQTEKLLRRNPKYITILAPIVTYFLTIFAGTGNISLATLPVIAEVAKEQGVKPCRPLSTAVVSAQIAITASPISAAVVYMSSVMEGHGISYLHLLSVVIPSTLLAVLVMSFLVTMLFNSKLSDDPIYRKRLEEGLVELRGEKQIEIKSGAKTSVWLFLLGVVGVVIYAIINSPSMGLVEKPLMNTTNAILIIMLSVATLTTVICKVDTDNILNSSTFKAGMSACICILGVAWLGDTFVSNNIDWIKDTAGEVIQGHPWLLAVIFFFASALLYSQAATAKALMPMALALNVSPLTAVASFAAVSGLFILPTYPTLVAAVQMDDTGTTRIGKFVFNHPFFIPGTLGVALAVCFGFVLGSFML.

A helical transmembrane segment spans residues 1–18 (MLVVELIIVLLAIFLGAR). A topological domain (cytoplasmic) is located at residue Leu19. The helical transmembrane segment at 20–37 (GGIGIGFAGGLGVLVLAA) threads the bilayer. Residues 38-53 (IGVKPGNIPFDVISII) are Periplasmic-facing. The helical transmembrane segment at 54–71 (MAVIAAISAMQVAGGLDY) threads the bilayer. Over 72–85 (LVHQTEKLLRRNPK) the chain is Cytoplasmic. The chain crosses the membrane as a helical span at residues 86–103 (YITILAPIVTYFLTIFAG). Residues 104 to 132 (TGNISLATLPVIAEVAKEQGVKPCRPLST) are Periplasmic-facing. A helical transmembrane segment spans residues 133–147 (AVVSAQIAITASPIS). At 148-228 (AAVVYMSSVM…IKSGAKTSVW (81 aa)) the chain is on the cytoplasmic side. The chain crosses the membrane as a helical span at residues 229-246 (LFLLGVVGVVIYAIINSP). Topologically, residues 247 to 264 (SMGLVEKPLMNTTNAILI) are periplasmic. A helical transmembrane segment spans residues 265–282 (IMLSVATLTTVICKVDTD). The Cytoplasmic portion of the chain corresponds to 283-292 (NILNSSTFKA). Residues 293-310 (GMSACICILGVAWLGDTF) traverse the membrane as a helical segment. Residues 311–332 (VSNNIDWIKDTAGEVIQGHPWL) lie on the Periplasmic side of the membrane. Residues 333-350 (LAVIFFFASALLYSQAAT) form a helical membrane-spanning segment. Over 351–355 (AKALM) the chain is Cytoplasmic. Residues 356–373 (PMALALNVSPLTAVASFA) form a helical membrane-spanning segment. Residues 374-433 (AVSGLFILPTYPTLVAAVQMDDTGTTRIGKFVFNHPFFIPGTLGVALAVCFGFVLGSFML) lie on the Periplasmic side of the membrane.

This sequence belongs to the DcuA/DcuB transporter (TC 2.A.13.1) family.

The protein resides in the cell inner membrane. The catalysed reaction is fumarate(in) + L-aspartate(out) = fumarate(out) + L-aspartate(in). It catalyses the reaction fumarate(in) + succinate(out) = fumarate(out) + succinate(in). The enzyme catalyses (S)-malate(in) + succinate(out) = (S)-malate(out) + succinate(in). It carries out the reaction L-aspartate(in) + succinate(out) = L-aspartate(out) + succinate(in). In terms of biological role, responsible for the transport of C4-dicarboxylates during aerobic and anaerobic growth. Required for the uptake of L-aspartate as a nitrogen source during aerobic growth. The uptake of L-aspartate in aerobic conditions is coupled to the excretion of fumarate, resulting in the net uptake of nitrogen without carbon uptake. In addition, during anaerobic growth, catalyzes the uptake of fumarate, malate or aspartate coupled to the export of succinate. May play a a general role in anaerobic C4-dicarboxylate transport. In Escherichia coli O157:H7, this protein is C4-dicarboxylate transporter DcuA (dcuA).